Consider the following 88-residue polypeptide: Small ribosomal subunit protein bS18 (88 aa).

It belongs to the bacterial ribosomal protein bS18 family. In terms of assembly, part of the 30S ribosomal subunit. Forms a tight heterodimer with protein bS6.

In terms of biological role, binds as a heterodimer with protein bS6 to the central domain of the 16S rRNA, where it helps stabilize the platform of the 30S subunit. This chain is Small ribosomal subunit protein bS18, found in Syntrophus aciditrophicus (strain SB).